We begin with the raw amino-acid sequence, 180 residues long: CASP-like protein 5A1 (180 aa).

Residues 1-36 (MEVSHPAVHPVAVPPVLTEPPARVRMKDYQGMPGTL) lie on the Cytoplasmic side of the membrane. Residues 37–57 (GGLALRLGQLGFAVLSFSIMV) traverse the membrane as a helical segment. At 58 to 67 (STPDFSQVTA) the chain is on the extracellular side. A helical transmembrane segment spans residues 68–88 (FCYLVAATVLQTLWSSITAVV). At 89 to 102 (DIYALSVRRSLHHS) the chain is on the cytoplasmic side. The chain crosses the membrane as a helical span at residues 103–123 (LLVGLFAVGDGVTSTLTFAAA). Over 124-150 (CATAGITVLIDNDLDECGQNHCGRFEA) the chain is Extracellular. A helical membrane pass occupies residues 151–171 (AAAMAFLSWIMAAPSFLLAFW). Residues 172 to 180 (SFGNKIVCF) are Cytoplasmic-facing.

This sequence belongs to the Casparian strip membrane proteins (CASP) family. Homodimer and heterodimers.

It is found in the cell membrane. This Pteridium aquilinum subsp. aquilinum (Bracken fern) protein is CASP-like protein 5A1.